The following is a 447-amino-acid chain: MDRRTFDRKTNNPQRYRLDRFVATRDSFSETRRRRSWHAAFDVHPVNNDRWSEGNLKKKNYIKYLDKAFDLESPDKNKSIKRMNRLWPCIPRKKTYLSSADSILDLPTYSYAIYPELLDWSNDNMLVAALGSSYHKWSWRSQSLIGHGFAEYEIQCCKFDPRGELLALGTYMKTLEIHNNSKSKKIMSNTCKCLEIDNMNCSITAVDWSPTGNSFAAGCSGGAVTSFTRAAKLISWRHLVREAILLIRVSPNARYLAVTAMNTALVLLLSWPSLEMYSSIDSDWSIRAICWHPWRSALLGVGAVTDDLQARIALWNAPTREVRDTSIGPKGYRLDSMLFSHRTGELVLSMWHSDRATLHPKTCSQLVVLSDPDTMVDQWGEGRSGLDRVRTMIFSPDGTKLATATTDEDLIIWNFLPEDNKMKKTKCRSFSALPECLDNAMLGYSLR.

6 WD repeats span residues 108–148 (TYSY…IGHG), 149–188 (FAEYEIQCCKFDPRGELLALGTYMKTLEIHNNSKSKKIMS), 198–237 (NMNCSITAVDWSPTGNSFAAGCSGGAVTSFTRAAKLISWR), 281–325 (DSDW…VRDT), 344–380 (GELVLSMWHSDRATLHPKTCSQLVVLSDPDTMVDQWG), and 384–423 (SGLDRVRTMIFSPDGTKLATATTDEDLIIWNFLPEDNKMK). The D-box motif lies at 384–395 (SGLDRVRTMIFS).

Belongs to the WD repeat CORT family.

The protein localises to the cytoplasm. Controls wing pigmentation patterning by regulating scale cell development, thereby playing a key role in mimicry and crypsis. Probably acts as an activator of the anaphase promoting complex/cyclosome (APC/C) that promotes the ubiquitin ligase activity and substrate specificity of the APC/C. The sequence is that of Protein cortex from Heliconius melpomene (Postman butterfly).